A 439-amino-acid polypeptide reads, in one-letter code: Proline--tRNA ligase (439 aa).

This sequence belongs to the class-II aminoacyl-tRNA synthetase family. ProS type 2 subfamily. In terms of assembly, homodimer.

The protein resides in the cytoplasm. It carries out the reaction tRNA(Pro) + L-proline + ATP = L-prolyl-tRNA(Pro) + AMP + diphosphate. In terms of biological role, catalyzes the attachment of proline to tRNA(Pro) in a two-step reaction: proline is first activated by ATP to form Pro-AMP and then transferred to the acceptor end of tRNA(Pro). The polypeptide is Proline--tRNA ligase (Parvibaculum lavamentivorans (strain DS-1 / DSM 13023 / NCIMB 13966)).